A 153-amino-acid chain; its full sequence is Ribosomal RNA large subunit methyltransferase H (153 aa).

Residues Leu70, Gly102, and 121–126 (LSSMTF) contribute to the S-adenosyl-L-methionine site.

Belongs to the RNA methyltransferase RlmH family. Homodimer.

The protein localises to the cytoplasm. It catalyses the reaction pseudouridine(1915) in 23S rRNA + S-adenosyl-L-methionine = N(3)-methylpseudouridine(1915) in 23S rRNA + S-adenosyl-L-homocysteine + H(+). Functionally, specifically methylates the pseudouridine at position 1915 (m3Psi1915) in 23S rRNA. This is Ribosomal RNA large subunit methyltransferase H from Dictyoglomus thermophilum (strain ATCC 35947 / DSM 3960 / H-6-12).